The sequence spans 91 residues: Small membrane A-kinase anchor protein (91 aa).

Glycine 2 carries N-myristoyl glycine lipidation.

The protein belongs to the small membrane AKAP family. May be palmitoylated at Cys-3.

The protein resides in the cell membrane. Its function is as follows. Binds to type I regulatory subunits of protein kinase A and may anchor/target them to the plasma membrane. This is Small membrane A-kinase anchor protein from Xenopus tropicalis (Western clawed frog).